The chain runs to 556 residues: Glutamine--tRNA ligase (556 aa).

The 'HIGH' region motif lies at 35–45 (PEPNGYLHIGH). Residues 36 to 38 (EPN) and 42 to 48 (HIGHAKS) contribute to the ATP site. Asp-68 and Tyr-213 together coordinate L-glutamine. ATP is bound by residues Thr-232 and 262-263 (RL). The 'KMSKS' region signature appears at 269–273 (VTSKR).

Belongs to the class-I aminoacyl-tRNA synthetase family. Monomer.

Its subcellular location is the cytoplasm. It catalyses the reaction tRNA(Gln) + L-glutamine + ATP = L-glutaminyl-tRNA(Gln) + AMP + diphosphate. This Pseudomonas aeruginosa (strain LESB58) protein is Glutamine--tRNA ligase.